The sequence spans 140 residues: UPF0134 protein MPN_130 (140 aa).

This sequence belongs to the UPF0134 family.

This Mycoplasma pneumoniae (strain ATCC 29342 / M129 / Subtype 1) (Mycoplasmoides pneumoniae) protein is UPF0134 protein MPN_130.